The chain runs to 532 residues: Glucose-6-phosphate isomerase (532 aa).

E330 acts as the Proton donor in catalysis. Catalysis depends on residues H359 and K460.

It belongs to the GPI family.

The protein localises to the cytoplasm. It carries out the reaction alpha-D-glucose 6-phosphate = beta-D-fructose 6-phosphate. The protein operates within carbohydrate biosynthesis; gluconeogenesis. It participates in carbohydrate degradation; glycolysis; D-glyceraldehyde 3-phosphate and glycerone phosphate from D-glucose: step 2/4. Catalyzes the reversible isomerization of glucose-6-phosphate to fructose-6-phosphate. This is Glucose-6-phosphate isomerase from Prochlorococcus marinus (strain MIT 9211).